Here is a 350-residue protein sequence, read N- to C-terminus: Cephaeline 6'-O-methyltransferase CiOMT (350 aa).

S-adenosyl-L-methionine contacts are provided by G193, D216, D236, M237, and K250. The active-site Proton acceptor is H254.

It belongs to the class I-like SAM-binding methyltransferase superfamily. Cation-independent O-methyltransferase family.

It is found in the cytoplasm. Its subcellular location is the cytosol. The enzyme catalyses 7'-O-demethylcephaeline + S-adenosyl-L-methionine = cephaeline + S-adenosyl-L-homocysteine + H(+). It catalyses the reaction cephaeline + S-adenosyl-L-methionine = emetine + S-adenosyl-L-homocysteine + H(+). Its pathway is alkaloid biosynthesis. Inhibited by Co(2+), Ni(2+), Zn(2+) and Mn(2+) ions. Its function is as follows. O-methyltransferase involved in the biosynthesis of ipecac and benzylisoquinoline monoterpenoid-isoquinoline alkaloids natural products, starting by the condensation of dopamine and secologanin, and including emetine and cephaeline, drugs used both as anti-protozoal (e.g. treatment of ameobiasis) and as emetic agents. Catalyzes successively the 7'-O-methylation of 7'-O-demethylcephaeline to produce cephaeline, and its 6'-O-methylation to produce emetine. The sequence is that of Cephaeline 6'-O-methyltransferase CiOMT from Carapichea ipecacuanha (Ipecac).